Here is a 329-residue protein sequence, read N- to C-terminus: Glycerol-3-phosphate dehydrogenase [NAD(P)+] (329 aa).

Residues Tyr-14, Arg-34, and Lys-108 each contribute to the NADPH site. Sn-glycerol 3-phosphate is bound by residues Lys-108, Gly-137, and Ser-139. Ala-141 is an NADPH binding site. Residues Lys-192, Asp-245, Ser-255, Arg-256, and Asn-257 each coordinate sn-glycerol 3-phosphate. The active-site Proton acceptor is the Lys-192. Arg-256 is an NADPH binding site. NADPH is bound by residues Ile-280 and Glu-282.

It belongs to the NAD-dependent glycerol-3-phosphate dehydrogenase family.

Its subcellular location is the cytoplasm. It catalyses the reaction sn-glycerol 3-phosphate + NAD(+) = dihydroxyacetone phosphate + NADH + H(+). The enzyme catalyses sn-glycerol 3-phosphate + NADP(+) = dihydroxyacetone phosphate + NADPH + H(+). Its pathway is membrane lipid metabolism; glycerophospholipid metabolism. Its function is as follows. Catalyzes the reduction of the glycolytic intermediate dihydroxyacetone phosphate (DHAP) to sn-glycerol 3-phosphate (G3P), the key precursor for phospholipid synthesis. The sequence is that of Glycerol-3-phosphate dehydrogenase [NAD(P)+] from Wigglesworthia glossinidia brevipalpis.